The sequence spans 502 residues: Glycerol kinase (502 aa).

Threonine 15 is a binding site for ADP. Positions 15, 16, and 17 each coordinate ATP. Position 15 (threonine 15) interacts with sn-glycerol 3-phosphate. Position 19 (arginine 19) interacts with ADP. Sn-glycerol 3-phosphate is bound by residues arginine 85, glutamate 86, and tyrosine 137. Glycerol-binding residues include arginine 85, glutamate 86, and tyrosine 137. Histidine 233 bears the Phosphohistidine; by HPr mark. Aspartate 247 is a sn-glycerol 3-phosphate binding site. The glycerol site is built by aspartate 247 and glutamine 248. 2 residues coordinate ADP: threonine 269 and glycine 312. Threonine 269, glycine 312, glutamine 316, and glycine 413 together coordinate ATP. The ADP site is built by glycine 413 and asparagine 417.

It belongs to the FGGY kinase family. Homotetramer and homodimer (in equilibrium). Post-translationally, the phosphoenolpyruvate-dependent sugar phosphotransferase system (PTS), including enzyme I, and histidine-containing protein (HPr) are required for the phosphorylation, which leads to the activation of the enzyme.

The enzyme catalyses glycerol + ATP = sn-glycerol 3-phosphate + ADP + H(+). Its pathway is polyol metabolism; glycerol degradation via glycerol kinase pathway; sn-glycerol 3-phosphate from glycerol: step 1/1. With respect to regulation, activated by phosphorylation and inhibited by fructose 1,6-bisphosphate (FBP). Functionally, key enzyme in the regulation of glycerol uptake and metabolism. Catalyzes the phosphorylation of glycerol to yield sn-glycerol 3-phosphate. This is Glycerol kinase from Streptococcus agalactiae serotype Ia (strain ATCC 27591 / A909 / CDC SS700).